The primary structure comprises 357 residues: DNA replication and repair protein RecF (357 aa).

30 to 37 contacts ATP; sequence GANGSGKT.

This sequence belongs to the RecF family.

It localises to the cytoplasm. Its function is as follows. The RecF protein is involved in DNA metabolism; it is required for DNA replication and normal SOS inducibility. RecF binds preferentially to single-stranded, linear DNA. It also seems to bind ATP. This is DNA replication and repair protein RecF from Citrobacter koseri (strain ATCC BAA-895 / CDC 4225-83 / SGSC4696).